The sequence spans 442 residues: Cell division protein FtsA (442 aa).

Positions 401-428 (VTSYDNDSYDAPEETVYDEPEQKKSDED) are disordered. Over residues 407 to 419 (DSYDAPEETVYDE) the composition is skewed to acidic residues.

The protein belongs to the FtsA/MreB family. In terms of assembly, self-interacts. Interacts with FtsZ.

Its subcellular location is the cell membrane. Its function is as follows. Cell division protein that is involved in the assembly of the Z ring. May serve as a membrane anchor for the Z ring. The sequence is that of Cell division protein FtsA from Enterococcus hirae.